A 230-amino-acid chain; its full sequence is Ribonuclease HII (230 aa).

Residues 28-217 form the RNase H type-2 domain; that stretch reads FRIAGIDEAG…VKEHLPSQPD (190 aa). 3 residues coordinate a divalent metal cation: Asp-34, Glu-35, and Asp-126. The tract at residues 209–230 is disordered; it reads KEHLPSQPDSDTAGPSTGLFSF. Polar residues predominate over residues 215–230; the sequence is QPDSDTAGPSTGLFSF.

The protein belongs to the RNase HII family. Mn(2+) is required as a cofactor. Requires Mg(2+) as cofactor.

It localises to the cytoplasm. The catalysed reaction is Endonucleolytic cleavage to 5'-phosphomonoester.. In terms of biological role, endonuclease that specifically degrades the RNA of RNA-DNA hybrids. In Citrifermentans bemidjiense (strain ATCC BAA-1014 / DSM 16622 / JCM 12645 / Bem) (Geobacter bemidjiensis), this protein is Ribonuclease HII.